We begin with the raw amino-acid sequence, 265 residues long: 4-hydroxy-tetrahydrodipicolinate reductase (265 aa).

Residues Gly-7–Met-12 and Asp-33 each bind NAD(+). Arg-34 contributes to the NADP(+) binding site. NAD(+)-binding positions include Gly-96–Thr-98 and Ala-120–Met-123. The active-site Proton donor/acceptor is His-153. Position 154 (His-154) interacts with (S)-2,3,4,5-tetrahydrodipicolinate. The active-site Proton donor is the Lys-157. Gly-163–Thr-164 provides a ligand contact to (S)-2,3,4,5-tetrahydrodipicolinate.

The protein belongs to the DapB family.

It localises to the cytoplasm. The enzyme catalyses (S)-2,3,4,5-tetrahydrodipicolinate + NAD(+) + H2O = (2S,4S)-4-hydroxy-2,3,4,5-tetrahydrodipicolinate + NADH + H(+). It carries out the reaction (S)-2,3,4,5-tetrahydrodipicolinate + NADP(+) + H2O = (2S,4S)-4-hydroxy-2,3,4,5-tetrahydrodipicolinate + NADPH + H(+). Its pathway is amino-acid biosynthesis; L-lysine biosynthesis via DAP pathway; (S)-tetrahydrodipicolinate from L-aspartate: step 4/4. Catalyzes the conversion of 4-hydroxy-tetrahydrodipicolinate (HTPA) to tetrahydrodipicolinate. This Burkholderia ambifaria (strain ATCC BAA-244 / DSM 16087 / CCUG 44356 / LMG 19182 / AMMD) (Burkholderia cepacia (strain AMMD)) protein is 4-hydroxy-tetrahydrodipicolinate reductase.